Reading from the N-terminus, the 305-residue chain is Small ribosomal subunit biogenesis GTPase RsgA (305 aa).

Positions 67-224 constitute a CP-type G domain; that stretch reads SSELVRPAVA…VADTPGFSSF (158 aa). Residues 116–119 and 166–174 each bind GTP; these read NKID and GQSGVGKST. 4 residues coordinate Zn(2+): C248, C253, H255, and C261.

Belongs to the TRAFAC class YlqF/YawG GTPase family. RsgA subfamily. As to quaternary structure, monomer. Associates with 30S ribosomal subunit, binds 16S rRNA. Zn(2+) is required as a cofactor.

The protein resides in the cytoplasm. Functionally, one of several proteins that assist in the late maturation steps of the functional core of the 30S ribosomal subunit. Helps release RbfA from mature subunits. May play a role in the assembly of ribosomal proteins into the subunit. Circularly permuted GTPase that catalyzes slow GTP hydrolysis, GTPase activity is stimulated by the 30S ribosomal subunit. The polypeptide is Small ribosomal subunit biogenesis GTPase RsgA (Ruminiclostridium cellulolyticum (strain ATCC 35319 / DSM 5812 / JCM 6584 / H10) (Clostridium cellulolyticum)).